A 125-amino-acid polypeptide reads, in one-letter code: Calcitonin receptor-stimulating peptide 3 (125 aa).

An N-terminal signal peptide occupies residues 1–25 (MGFWKFPPFLILSILVLYQAGMLHA). The propeptide occupies 26–79 (APFRMALGSSFDSATLTEEEMSLLLVAMVKDYVQMKATVLEQETEDFSITTQER). The cysteines at positions 81 and 86 are disulfide-linked. A Leucine amide modification is found at L116. Residues 122 to 125 (QPQA) constitute a propeptide that is removed on maturation.

The protein belongs to the calcitonin family. Mainly expressed in the thyroid gland and CNS. Found in the nerve cells of cerebrum, hippocampus, hypothalamus, pons/midbrain and thalamus.

The protein localises to the secreted. The polypeptide is Calcitonin receptor-stimulating peptide 3 (CRSP3) (Sus scrofa (Pig)).